Consider the following 468-residue polypeptide: 23S rRNA (uracil(1939)-C(5))-methyltransferase RlmD (468 aa).

A TRAM domain is found at 12 to 70; the sequence is SKQLSPKLSLNVTQLDHLGAGMAQHQGKVVFIPQALPGERVSVQLTDQKKSFAKAKLIK. The [4Fe-4S] cluster site is built by Cys-83, Cys-89, Cys-92, and Cys-174. S-adenosyl-L-methionine is bound by residues Gln-296, Phe-325, Asn-330, Glu-351, Asp-378, and Asp-398. Residue Cys-424 is the Nucleophile of the active site.

This sequence belongs to the class I-like SAM-binding methyltransferase superfamily. RNA M5U methyltransferase family. RlmD subfamily.

The enzyme catalyses uridine(1939) in 23S rRNA + S-adenosyl-L-methionine = 5-methyluridine(1939) in 23S rRNA + S-adenosyl-L-homocysteine + H(+). Functionally, catalyzes the formation of 5-methyl-uridine at position 1939 (m5U1939) in 23S rRNA. In Shewanella denitrificans (strain OS217 / ATCC BAA-1090 / DSM 15013), this protein is 23S rRNA (uracil(1939)-C(5))-methyltransferase RlmD.